The following is a 583-amino-acid chain: Lipoprotein LpqB (583 aa).

The N-terminal stretch at 1–29 (MSNKTTEATKTTKVKKVLSVVAGLGLLAG) is a signal peptide. C30 is lipidated: N-palmitoyl cysteine. A lipid anchor (S-diacylglycerol cysteine) is attached at C30. The tract at residues 38-63 (NPEAISSYAPAPSGQEAPTPTDGQPS) is disordered.

This sequence belongs to the LpqB lipoprotein family.

It localises to the cell membrane. This is Lipoprotein LpqB from Corynebacterium jeikeium (strain K411).